A 423-amino-acid polypeptide reads, in one-letter code: Immunity-related GTPase family M protein 3 (423 aa).

The 178-residue stretch at 83 to 260 (YRVKIAVTGD…PELRNTLQKD (178 aa)) folds into the IRG-type G domain. Residues 92 to 99 (DSGNGMSS), 117 to 121 (TGVVR), and 200 to 202 (KLD) contribute to the GTP site.

It belongs to the TRAFAC class dynamin-like GTPase superfamily. IRG family.

The protein localises to the endoplasmic reticulum. Its subcellular location is the cytoplasmic vesicle membrane. It is found in the lipid droplet. The catalysed reaction is GTP + H2O = GDP + phosphate + H(+). Immunity-related GTPase that plays important roles in host resistance to acute infection by protozoan, such as Toxoplasma gondii and Leishmania major. Acts as a dynamin-like protein that binds to intracellular membranes and promotes remodeling and trafficking of those membranes. Acts predominantly to restrict acute protozoan infection: expression is required in both hematopoietic and non-hematopoietic cellular compartments and is dependent on Stat1. Only plays a partial role in the control of latent Toxoplasma infection. Involved in the clearance of acute protozoan infections by regulating autophagy, possibly by promoting the fusion of phagosomes with lysosomes for efficient degradation of vacuoles containing parasites. Probably involved in membrane disruption of parasite-containing vacuoles. In addition to its role in resistance to acute infection by protozoan, also acts as a negative regulator of the integrated stress response (ISR) following coxsackievirus B3 infection. Promotes differentiation of activated CD8(+) T-cells. The chain is Immunity-related GTPase family M protein 3 from Mus musculus (Mouse).